The chain runs to 377 residues: Glutamate 5-kinase (377 aa).

An ATP-binding site is contributed by Lys-18. Substrate contacts are provided by Ser-55, Asp-142, and Asn-154. Residues 174-175 (SD) and 216-222 (TGGMKSK) contribute to the ATP site. The 79-residue stretch at 281–359 (QGEVVVDAGA…REIEALLGYK (79 aa)) folds into the PUA domain.

It belongs to the glutamate 5-kinase family.

The protein localises to the cytoplasm. It carries out the reaction L-glutamate + ATP = L-glutamyl 5-phosphate + ADP. Its pathway is amino-acid biosynthesis; L-proline biosynthesis; L-glutamate 5-semialdehyde from L-glutamate: step 1/2. In terms of biological role, catalyzes the transfer of a phosphate group to glutamate to form L-glutamate 5-phosphate. The polypeptide is Glutamate 5-kinase (Meiothermus ruber).